A 440-amino-acid polypeptide reads, in one-letter code: Gap junction gamma-2 protein (440 aa).

Topologically, residues 1-21 (MTNMSWSFLTRLLEEIHNHST) are cytoplasmic. Residues 22-42 (FVGKVWLTVLVVFRIVLTAVG) form a helical membrane-spanning segment. Topologically, residues 43–78 (GESIYSDEQSKFTCNTRQPGCDNVCYDAFAPLSHVR) are extracellular. Residues 79-99 (FWVFQIVVISTPSVMYLGYAV) form a helical membrane-spanning segment. At 100–223 (HRLARASEQE…AQLVVRAAFE (124 aa)) the chain is on the cytoplasmic side. The tract at residues 108–199 (QERRRALRRR…TPGPAGQHDG (92 aa)) is disordered. Residues 112–124 (RALRRRPGPRRLP) show a composition bias toward basic residues. Over residues 150-173 (LEEDEDEEPGAPEGPGEDTEEERT) the composition is skewed to acidic residues. The helical transmembrane segment at 224-244 (VAFLVGQYLLYGFEVPPFFAC) threads the bilayer. The Extracellular segment spans residues 245 to 264 (SRQPCPHVVDCFVSRPTEKT). The helical transmembrane segment at 265 to 285 (VFLLVMYVVSCLCLLLNLCEM) threads the bilayer. Residues 286–440 (AHLGLGSAQD…SRDGKATVWI (155 aa)) are Cytoplasmic-facing. The tract at residues 368 to 440 (ADRDSPPCSG…SRDGKATVWI (73 aa)) is disordered. A Phosphoserine modification is found at Ser372. A compositionally biased stretch (low complexity) spans 380–401 (ATSRGPPRAGGPASGTGSATSG).

The protein belongs to the connexin family. Gamma-type subfamily. As to quaternary structure, a connexon is composed of a hexamer of connexins. Interacts with TJP1. Mainly expressed by oligodendrocytes in the central nervous system. Expressed in optic nerve (at protein level).

The protein resides in the cell membrane. The protein localises to the cell junction. It is found in the gap junction. One gap junction consists of a cluster of closely packed pairs of transmembrane channels, the connexons, through which materials of low MW diffuse from one cell to a neighboring cell. May play a role in myelination in central and peripheral nervous systems. The protein is Gap junction gamma-2 protein (Gjc2) of Rattus norvegicus (Rat).